The sequence spans 102 residues: SITWLFATTLFIGYMPIHCPSETDTDSVFLQDGVSFIIYKFTYTTPPSPVPAVFIKHNVGSPRESRVRVPDMGSSPVAAELLHPSPAPMPPATHGRSAAPCS.

The tract at residues alanine 79–serine 102 is disordered.

This is an uncharacterized protein from Homo sapiens (Human).